The following is a 185-amino-acid chain: MRKDAKENRQRIEEIAHKLFDEEGVENISMNRIAKELGIGMGTLYRHFKDKSDLCYYVIQRDLDIFITHFKQIKDDYHSNYEVMQVSLDYLLQFKIDHKALLQCIEAGNNKLRFYQSAFYQELFYFYYDLFKSDDDIYTKFKTDMLLQALSTRVFDFQIEHRNISIEAYRNYLLNIYLDEVERND.

The HTH tetR-type domain occupies 6-66; it reads KENRQRIEEI…YVIQRDLDIF (61 aa). A DNA-binding region (H-T-H motif) is located at residues 29-48; the sequence is SMNRIAKELGIGMGTLYRHF.

The chain is HTH-type transcriptional regulator SAR2658 from Staphylococcus aureus (strain MRSA252).